The sequence spans 346 residues: tRNA N6-adenosine threonylcarbamoyltransferase (346 aa).

His-111 and His-115 together coordinate Fe cation. Substrate contacts are provided by residues Leu-134–Gly-138, Asp-167, Gly-180, and Asn-279. Position 307 (Asp-307) interacts with Fe cation.

It belongs to the KAE1 / TsaD family. The cofactor is Fe(2+).

Its subcellular location is the cytoplasm. The catalysed reaction is L-threonylcarbamoyladenylate + adenosine(37) in tRNA = N(6)-L-threonylcarbamoyladenosine(37) in tRNA + AMP + H(+). In terms of biological role, required for the formation of a threonylcarbamoyl group on adenosine at position 37 (t(6)A37) in tRNAs that read codons beginning with adenine. Is involved in the transfer of the threonylcarbamoyl moiety of threonylcarbamoyl-AMP (TC-AMP) to the N6 group of A37, together with TsaE and TsaB. TsaD likely plays a direct catalytic role in this reaction. The sequence is that of tRNA N6-adenosine threonylcarbamoyltransferase from Burkholderia pseudomallei (strain K96243).